A 339-amino-acid polypeptide reads, in one-letter code: Protein-glutamate methylesterase/protein-glutamine glutaminase 2 (339 aa).

One can recognise a Response regulatory domain in the interval Asn2 to Ala119. Position 53 is a 4-aspartylphosphate (Asp53). The region spanning Pro141 to Pro336 is the CheB-type methylesterase domain. Residues Ser158, His185, and Asp278 contribute to the active site.

This sequence belongs to the CheB family. In terms of processing, phosphorylated by CheA. Phosphorylation of the N-terminal regulatory domain activates the methylesterase activity.

It is found in the cytoplasm. The catalysed reaction is [protein]-L-glutamate 5-O-methyl ester + H2O = L-glutamyl-[protein] + methanol + H(+). It catalyses the reaction L-glutaminyl-[protein] + H2O = L-glutamyl-[protein] + NH4(+). Functionally, involved in chemotaxis. Part of a chemotaxis signal transduction system that modulates chemotaxis in response to various stimuli. Catalyzes the demethylation of specific methylglutamate residues introduced into the chemoreceptors (methyl-accepting chemotaxis proteins or MCP) by CheR. Also mediates the irreversible deamidation of specific glutamine residues to glutamic acid. The chain is Protein-glutamate methylesterase/protein-glutamine glutaminase 2 from Burkholderia lata (strain ATCC 17760 / DSM 23089 / LMG 22485 / NCIMB 9086 / R18194 / 383).